A 142-amino-acid chain; its full sequence is Nucleoside diphosphate kinase (142 aa).

ATP is bound by residues lysine 11, phenylalanine 59, arginine 87, threonine 93, arginine 104, and asparagine 114. Histidine 117 functions as the Pros-phosphohistidine intermediate in the catalytic mechanism.

This sequence belongs to the NDK family. As to quaternary structure, homotetramer. It depends on Mg(2+) as a cofactor.

It localises to the cytoplasm. The enzyme catalyses a 2'-deoxyribonucleoside 5'-diphosphate + ATP = a 2'-deoxyribonucleoside 5'-triphosphate + ADP. It carries out the reaction a ribonucleoside 5'-diphosphate + ATP = a ribonucleoside 5'-triphosphate + ADP. Functionally, major role in the synthesis of nucleoside triphosphates other than ATP. The ATP gamma phosphate is transferred to the NDP beta phosphate via a ping-pong mechanism, using a phosphorylated active-site intermediate. The sequence is that of Nucleoside diphosphate kinase from Marinobacter nauticus (strain ATCC 700491 / DSM 11845 / VT8) (Marinobacter aquaeolei).